The primary structure comprises 464 residues: GDNF family receptor alpha-2 (464 aa).

The signal sequence occupies residues 1–21 (MILANAFCLFFFLDETLRSLA). Cystine bridges form between C40-C93, C47-C53, C63-C78, C95-C105, C161-C222, C168-C174, C185-C200, C195-C241, C224-C229, C251-C323, C258-C264, C275-C293, C285-C347, and C325-C335. N52 carries an N-linked (GlcNAc...) asparagine glycan. N-linked (GlcNAc...) asparagine glycosylation occurs at N357. Polar residues predominate over residues 360-374 (DVNLSPKSPPFQATQ). Residues 360-392 (DVNLSPKSPPFQATQAPRVDKTPSLPDDLSDST) are disordered. Residues 381-392 (TPSLPDDLSDST) are compositionally biased toward low complexity. N413 carries an N-linked (GlcNAc...) asparagine glycan. Residue N440 is the site of GPI-anchor amidated asparagine attachment. A propeptide spans 441 to 464 (SGPRRTRPSAALTAASFLMLKLAL) (removed in mature form).

This sequence belongs to the GDNFR family. In terms of assembly, interacts with NRTN ligand and RET: forms a 2:2:2 ternary complex composed of NRTN ligand, GFRA2 and RET receptor. Also forms a 4:4:4 tetrameric complex composed of 4 copies of NRTN ligand, GFRA2 and RET receptor, which prevents endocytosis of RET. Interacts with SORL1.

The protein localises to the cell membrane. Receptor for neurturin (NRTN), a growth factor that supports the survival of sympathetic neurons. NRTN-binding leads to autophosphorylation and activation of the RET receptor. Also able to mediate GDNF signaling through the RET tyrosine kinase receptor. This Bos taurus (Bovine) protein is GDNF family receptor alpha-2 (GFRA2).